The primary structure comprises 334 residues: Holliday junction branch migration complex subunit RuvB (334 aa).

The interval 1 to 181 (MTRILDNDLM…FGITGHMEYY (181 aa)) is large ATPase domain (RuvB-L). ATP contacts are provided by residues leucine 20, arginine 21, glycine 62, lysine 65, threonine 66, threonine 67, 128-130 (EDF), arginine 171, tyrosine 181, and arginine 218. Residue threonine 66 participates in Mg(2+) binding. The small ATPAse domain (RuvB-S) stretch occupies residues 182 to 252 (QVDDLTEIVE…MTDKALEMLD (71 aa)). The tract at residues 255 to 334 (HEGLDYVDQK…LKYPLDTKTE (80 aa)) is head domain (RuvB-H). DNA is bound by residues arginine 291, arginine 310, arginine 312, and arginine 315.

Belongs to the RuvB family. Homohexamer. Forms an RuvA(8)-RuvB(12)-Holliday junction (HJ) complex. HJ DNA is sandwiched between 2 RuvA tetramers; dsDNA enters through RuvA and exits via RuvB. An RuvB hexamer assembles on each DNA strand where it exits the tetramer. Each RuvB hexamer is contacted by two RuvA subunits (via domain III) on 2 adjacent RuvB subunits; this complex drives branch migration. In the full resolvosome a probable DNA-RuvA(4)-RuvB(12)-RuvC(2) complex forms which resolves the HJ.

Its subcellular location is the cytoplasm. It carries out the reaction ATP + H2O = ADP + phosphate + H(+). In terms of biological role, the RuvA-RuvB-RuvC complex processes Holliday junction (HJ) DNA during genetic recombination and DNA repair, while the RuvA-RuvB complex plays an important role in the rescue of blocked DNA replication forks via replication fork reversal (RFR). RuvA specifically binds to HJ cruciform DNA, conferring on it an open structure. The RuvB hexamer acts as an ATP-dependent pump, pulling dsDNA into and through the RuvAB complex. RuvB forms 2 homohexamers on either side of HJ DNA bound by 1 or 2 RuvA tetramers; 4 subunits per hexamer contact DNA at a time. Coordinated motions by a converter formed by DNA-disengaged RuvB subunits stimulates ATP hydrolysis and nucleotide exchange. Immobilization of the converter enables RuvB to convert the ATP-contained energy into a lever motion, pulling 2 nucleotides of DNA out of the RuvA tetramer per ATP hydrolyzed, thus driving DNA branch migration. The RuvB motors rotate together with the DNA substrate, which together with the progressing nucleotide cycle form the mechanistic basis for DNA recombination by continuous HJ branch migration. Branch migration allows RuvC to scan DNA until it finds its consensus sequence, where it cleaves and resolves cruciform DNA. The chain is Holliday junction branch migration complex subunit RuvB from Streptococcus uberis (strain ATCC BAA-854 / 0140J).